A 259-amino-acid polypeptide reads, in one-letter code: uncharacterized protein (259 aa).

The region spanning 4–243 is the ABC transporter domain; sequence INLKNINLTR…KILTDFYQEK (240 aa). 36–43 serves as a coordination point for ATP; it reads GLNGSGKS.

The protein belongs to the ABC transporter superfamily.

This is an uncharacterized protein from Lactococcus lactis subsp. lactis (strain IL1403) (Streptococcus lactis).